The primary structure comprises 328 residues: D-cysteine desulfhydrase (328 aa).

An N6-(pyridoxal phosphate)lysine modification is found at Lys-51.

Belongs to the ACC deaminase/D-cysteine desulfhydrase family. As to quaternary structure, homodimer. Pyridoxal 5'-phosphate is required as a cofactor.

The enzyme catalyses D-cysteine + H2O = hydrogen sulfide + pyruvate + NH4(+) + H(+). In terms of biological role, catalyzes the alpha,beta-elimination reaction of D-cysteine and of several D-cysteine derivatives. It could be a defense mechanism against D-cysteine. The protein is D-cysteine desulfhydrase of Salmonella typhimurium (strain LT2 / SGSC1412 / ATCC 700720).